A 207-amino-acid chain; its full sequence is dTTP/UTP pyrophosphatase (207 aa).

The active-site Proton acceptor is Asp-68.

Belongs to the Maf family. YhdE subfamily. Requires a divalent metal cation as cofactor.

It localises to the cytoplasm. The catalysed reaction is dTTP + H2O = dTMP + diphosphate + H(+). It carries out the reaction UTP + H2O = UMP + diphosphate + H(+). In terms of biological role, nucleoside triphosphate pyrophosphatase that hydrolyzes dTTP and UTP. May have a dual role in cell division arrest and in preventing the incorporation of modified nucleotides into cellular nucleic acids. This chain is dTTP/UTP pyrophosphatase, found in Staphylothermus marinus (strain ATCC 43588 / DSM 3639 / JCM 9404 / F1).